We begin with the raw amino-acid sequence, 1009 residues long: Glutamate receptor ionotropic, delta-1 (1009 aa).

A signal peptide spans 1–20 (MEALTLWLLPWICQCVTVRA). The interaction with CBLN1 stretch occupies residues 21-436 (DSIIHIGAIF…ERPMGSRLQG (416 aa)). Residues 21 to 562 (DSIIHIGAIF…SIFSLFAPFD (542 aa)) lie on the Extracellular side of the membrane. 3 disulfide bridges follow: cysteine 80-cysteine 351, cysteine 96-cysteine 128, and cysteine 294-cysteine 306. N-linked (GlcNAc...) asparagine glycosylation is found at asparagine 131 and asparagine 200. N-linked (GlcNAc...) asparagine glycosylation is found at asparagine 422 and asparagine 498. Ca(2+) contacts are provided by glutamate 527, valine 530, and aspartate 531. A helical transmembrane segment spans residues 563 to 583 (FAVWACIAAAIPVVGVLIFVL). Residues 584-637 (NRIQAVRSQSATQPRPSASATLHSAIWIVYGAFVQQGGESSVNSVAMRIVMGSW) lie on the Cytoplasmic side of the membrane. The helical transmembrane segment at 638 to 658 (WLFTLIVCSSYTANLAAFLTV) threads the bilayer. The Extracellular segment spans residues 659 to 830 (SRMDNPIRTF…TEGKSLKLHS (172 aa)). 3 residues coordinate Ca(2+): aspartate 753, aspartate 755, and serine 757. A helical transmembrane segment spans residues 831–851 (FAGVFCILAIGLLLACLVAAL). The Cytoplasmic portion of the chain corresponds to 852 to 1009 (ELWWNSNRCH…ALDTSHGTSI (158 aa)). The segment covering 931–942 (LPEQSSHGTSRT) has biased composition (polar residues). The segment at 931-960 (LPEQSSHGTSRTLSSGPSSNLPLPLSSSAT) is disordered. The span at 943–958 (LSSGPSSNLPLPLSSS) shows a compositional bias: low complexity.

It belongs to the glutamate-gated ion channel (TC 1.A.10.1) family. GRID1 subfamily. As to quaternary structure, homodimer. Interacts (via extracellular N-terminal domain) with CBLN1 (via C1q domain), and more weakly with CBLN2; the interactions mediate the trans-synaptic adhesion complexes also with neurexins and are required for ligand-gated cation channel activity. In terms of tissue distribution, equally in forebrain and cerebellum.

Its subcellular location is the postsynaptic cell membrane. The enzyme catalyses Ca(2+)(in) = Ca(2+)(out). It carries out the reaction Na(+)(in) = Na(+)(out). Functionally, member of the ionotropic glutamate receptor family, which plays a crucial role in synaptic organization and signal transduction in the central nervous system. Although it shares structural features with ionotropic glutamate receptors, does not bind glutamate as a primary ligand. Instead, forms trans-synaptic adhesion complexes with presynaptic neurexins and cerebellins, regulating NMDA and AMPA receptor activity and influencing synaptic plasticity through signal transduction. In the presence of NRX1B-CBLN1, forms cation-selective channels that are proposed to be gated by glycine and D-serine. However, recent research disputes this ligand-gated cation channel activity. Cation-selective ion channel can be triggered by GRM1 in dopaminergic neurons. Also acts as a receptor for GABA, modulating inhibitory synaptic plasticity through non-ionotropic mechanisms. This is Glutamate receptor ionotropic, delta-1 (Grid1) from Mus musculus (Mouse).